The chain runs to 962 residues: Phagocyte signaling-impaired protein (962 aa).

TPR repeat units lie at residues 45 to 78 (LCARALKGLALLRLGRYEESHGCLQAVAEDKPTD), 79 to 112 (DSTLQVLSFCYREMEQLNKIVELYQHAVKKNPGN), and 523 to 560 (QIQLDSMGYVHCQLLPLCGRFSGARNSYDTTMKFFTNS). Residues 856–880 (TKVKKKQGDNKTQDTPQPVSEKERS) are disordered.

The protein belongs to the MDM20/NAA25 family. As to quaternary structure, component of the N-terminal acetyltransferase B (NatB) complex.

The protein resides in the lysosome. Its function is as follows. Non-catalytic subunit of the NatB complex which catalyzes acetylation of the N-terminal methionine residues of proteins beginning with Met-Asp or Met-Glu. Has 2 roles in the larval immune response: required both for the phagocytic degradation of internalized bacteria and for the induction of Defensin in the fat body. Within the phagocytic blood cells, has a role in detection of infection and activation of the humoral immune response. This Drosophila pseudoobscura pseudoobscura (Fruit fly) protein is Phagocyte signaling-impaired protein.